The primary structure comprises 70 residues: Conotoxin Im23.4 (70 aa).

Positions 1–22 (MIMRMTLTLFVLVVMTAASASG) are cleaved as a signal peptide. Residues 23-30 (DALTEAKR) constitute a propeptide that is removed on maturation. 3 disulfides stabilise this stretch: Cys34–Cys41, Cys45–Cys53, and Cys54–Cys69.

Belongs to the conotoxin K superfamily. Expressed by the venom duct.

It is found in the secreted. Its function is as follows. Probable neurotoxin. The protein is Conotoxin Im23.4 of Conus imperialis (Imperial cone).